The primary structure comprises 552 residues: Formate--tetrahydrofolate ligase (552 aa).

62–69 (TPAGEGKS) lines the ATP pocket.

Belongs to the formate--tetrahydrofolate ligase family.

The catalysed reaction is (6S)-5,6,7,8-tetrahydrofolate + formate + ATP = (6R)-10-formyltetrahydrofolate + ADP + phosphate. It participates in one-carbon metabolism; tetrahydrofolate interconversion. In Ligilactobacillus salivarius (strain UCC118) (Lactobacillus salivarius), this protein is Formate--tetrahydrofolate ligase.